We begin with the raw amino-acid sequence, 713 residues long: U3 small nucleolar RNA-associated protein 8 (713 aa).

T95 bears the Phosphothreonine mark. S148 and S150 each carry phosphoserine.

As to quaternary structure, interacts with snoRNA U3. Interacts with MPP10 and UTP25. Component of the ribosomal small subunit (SSU) processome composed of at least 40 protein subunits and snoRNA U3. In the absence of snoRNA3, forms a complex with other t-UTPs. This complex can associate with pre-18S ribosomal RNAs.

It localises to the nucleus. It is found in the nucleolus. Its function is as follows. Involved in nucleolar processing of pre-18S ribosomal RNA. Also has a role in nuclear tRNA export. It acts between the steps of tRNA maturation/aminoacylation and its subsequent translocation out of the nucleus. Required for optimal pre-ribosomal RNA transcription by RNA polymerase I together with a subset of U3 proteins required for transcription (t-UTPs). This is U3 small nucleolar RNA-associated protein 8 (UTP8) from Saccharomyces cerevisiae (strain ATCC 204508 / S288c) (Baker's yeast).